Here is a 482-residue protein sequence, read N- to C-terminus: FAD-dependent monooxygenase esdpE (482 aa).

The signal sequence occupies residues Met1–Ala21. Glu35 and Arg108 together coordinate FAD. Asn243 carries N-linked (GlcNAc...) asparagine glycosylation. The FAD site is built by Asp308 and Ala321. Residues Leu440–Trp460 traverse the membrane as a helical segment.

It belongs to the paxM FAD-dependent monooxygenase family. FAD serves as cofactor.

It is found in the membrane. Its pathway is secondary metabolite biosynthesis; terpenoid biosynthesis. Its function is as follows. FAD-dependent monooxygenase; part of the cluster that mediates the biosynthesis of shearones, diterpenoid pyrones (DPs) which are structurally diverse meroterpenoids consisting of a diterpene linked by a pyrone, and which may exhibit a range of bioactivities. Within the pathway, esdpE takes part to the biosynthesis of the molecular scaffold by catalyzing the formation of an (S)-epoxide ring at the terminal olefin of the geranylgeranyl group. The molecular scaffold is commonly biosynthesized by a series of enzymes including the non-reducing polyketide synthase (NR-PKS) esdpA that generates an alpha-pyrone; the prenyltransferase esdpC that attaches a geranylgeranyl pyrophosphate (GGPP) produced by the GGPP synthase (GGPPS) esdpD onto the pyrone unit; the FAD-dependent monooxygenase esdpE that converts an olefin on the diterpene unit into an epoxide; and the terpene cyclase esdpB that catalyzes the cyclization reactions to give the molecular backbone shearone A. In the modification steps, esdpF oxidizes the hydroxy group to a ketone at C-3 and esdpG then attaches hydroxy groups at both C-11 and C-12. After that, esdpI hydroxylates at C-20 and esdpH hydroxylates at C-6'. The ether bridge is generated by nucleophilic attack of the hydroxy group at C-20 to the carbonyl carbon at C-3. EsdpH can also functions prior to esdpI. The different combinations of these modification enzymes lead to the production of diverse shearone derivatives, shearone I being the end product of the pathway. The alpha-ketoglutarate-dependent dioxygenase esdpJ seems not to be involved in this pathway. The sequence is that of FAD-dependent monooxygenase esdpE from Penicillium shearii (Eupenicillium shearii).